Reading from the N-terminus, the 343-residue chain is Succinylglutamate desuccinylase (343 aa).

3 residues coordinate Zn(2+): H60, E63, and H157. Residue E221 is part of the active site.

The protein belongs to the AspA/AstE family. Succinylglutamate desuccinylase subfamily. Zn(2+) serves as cofactor.

The catalysed reaction is N-succinyl-L-glutamate + H2O = L-glutamate + succinate. Its pathway is amino-acid degradation; L-arginine degradation via AST pathway; L-glutamate and succinate from L-arginine: step 5/5. Functionally, transforms N(2)-succinylglutamate into succinate and glutamate. In Idiomarina loihiensis (strain ATCC BAA-735 / DSM 15497 / L2-TR), this protein is Succinylglutamate desuccinylase.